Here is a 430-residue protein sequence, read N- to C-terminus: Adenylosuccinate synthetase (430 aa).

GTP contacts are provided by residues 13–19 (GDEGKGK) and 41–43 (GHT). The Proton acceptor role is filled by D14. Positions 14 and 41 each coordinate Mg(2+). Residues 14–17 (DEGK), 39–42 (NAGH), T130, R144, Q225, T240, and R304 contribute to the IMP site. The Proton donor role is filled by H42. 300 to 306 (ATTGRAR) contacts substrate. Residues R306, 332–334 (KLD), and 414–416 (STG) contribute to the GTP site.

Belongs to the adenylosuccinate synthetase family. Homodimer. Mg(2+) serves as cofactor.

Its subcellular location is the cytoplasm. The enzyme catalyses IMP + L-aspartate + GTP = N(6)-(1,2-dicarboxyethyl)-AMP + GDP + phosphate + 2 H(+). It functions in the pathway purine metabolism; AMP biosynthesis via de novo pathway; AMP from IMP: step 1/2. In terms of biological role, plays an important role in the de novo pathway of purine nucleotide biosynthesis. Catalyzes the first committed step in the biosynthesis of AMP from IMP. This is Adenylosuccinate synthetase from Pseudomonas syringae pv. syringae (strain B728a).